We begin with the raw amino-acid sequence, 299 residues long: Telomere repeat-binding factor 2 (299 aa).

The 61-residue stretch at Met1–Leu61 folds into the HTH myb-type domain. Residues Trp28–Ser57 constitute a DNA-binding region (H-T-H motif). The tract at residues Leu93 to Cys116 is disordered. The region spanning Ser121–Ser189 is the H15 domain. Residues Glu243–Lys288 adopt a coiled-coil conformation.

This sequence belongs to the histone H1/H5 family. SMH subfamily. As to quaternary structure, forms a homodimer and heterodimers with TRB1 or TRB3. Interacts with TRB1 and TRB3. In terms of tissue distribution, ubiquitous.

The protein resides in the nucleus. The protein localises to the nucleolus. Its subcellular location is the chromosome. Functionally, binds preferentially double-stranded telomeric repeats, but it can also bind to the single G-rich telomeric strand. This Arabidopsis thaliana (Mouse-ear cress) protein is Telomere repeat-binding factor 2 (TRB2).